A 236-amino-acid chain; its full sequence is tRNA1(Val) (adenine(37)-N6)-methyltransferase (236 aa).

This sequence belongs to the methyltransferase superfamily. tRNA (adenine-N(6)-)-methyltransferase family.

It is found in the cytoplasm. It carries out the reaction adenosine(37) in tRNA1(Val) + S-adenosyl-L-methionine = N(6)-methyladenosine(37) in tRNA1(Val) + S-adenosyl-L-homocysteine + H(+). Its function is as follows. Specifically methylates the adenine in position 37 of tRNA(1)(Val) (anticodon cmo5UAC). The polypeptide is tRNA1(Val) (adenine(37)-N6)-methyltransferase (Actinobacillus pleuropneumoniae serotype 7 (strain AP76)).